A 1925-amino-acid polypeptide reads, in one-letter code: Methylcytosine dioxygenase tet3-A (1925 aa).

A CXXC-type zinc finger spans residues 62–103; it reads SNKKRKRCGVCVPCLRKEPCGACYNCVNRSTSHQICKMRKCE. Cys69, Cys72, Cys75, Cys81, Cys84, Cys87, Cys97, and Cys102 together coordinate Zn(2+). Disordered stretches follow at residues 457–476, 630–685, 774–812, and 833–892; these read KNALPVPQSPRQTSWEQNKK, KSQK…NAVF, GAKDSCPTPSTDDASSSSGQGDSANQHTNVGDVPGQNDL, and DFSL…PISH. Residues 465 to 476 are compositionally biased toward polar residues; the sequence is SPRQTSWEQNKK. The segment covering 665–677 has biased composition (basic residues); it reads KPPRKQVQIKKPR. Residues 777 to 797 are compositionally biased toward low complexity; it reads DSCPTPSTDDASSSSGQGDSA. Composition is skewed to polar residues over residues 841 to 856 and 883 to 892; these read APSQNGVGPPKQQISG and PALSNNPISH. Residues Cys982, Cys984, Cys1042, His1068, and Cys1070 each contribute to the Zn(2+) site. A 2-oxoglutarate-binding site is contributed by Arg1110. 5 residues coordinate Zn(2+): Cys1120, Cys1122, Cys1138, Cys1147, and Cys1207. Residue Cys1223 coordinates 2-oxoglutarate. His1229 lines the Zn(2+) pocket. Residues His1231 and Asp1233 each coordinate Fe cation. Residue His1265 coordinates 2-oxoglutarate. 4 disordered regions span residues 1307 to 1364, 1474 to 1513, 1556 to 1600, and 1722 to 1769; these read SEPA…QTKP, LADGMNQSYGSELPEQSYRRSSEVPHHYSLQNPNSQKSFN, SVHS…LPND, and NWAS…EEEI. Residues 1316-1347 show a composition bias toward basic and acidic residues; that stretch reads RQLDAKKAAAEKKKLQKEKLVSPDKTKQEPAD. Positions 1350 to 1363 are enriched in polar residues; it reads MCQQNPGVPQQQTK. Over residues 1490–1499 the composition is skewed to basic and acidic residues; the sequence is SYRRSSEVPH. Polar residues-rich tracts occupy residues 1502–1513, 1556–1572, and 1730–1742; these read SLQNPNSQKSFN, SVHSQSPGVNHSLQTSD, and VGNSLKTESSQNH. His1804 provides a ligand contact to Fe cation. Residue 1819-1821 participates in 2-oxoglutarate binding; the sequence is RIS. A coiled-coil region spans residues 1837-1870; the sequence is LALWEAKMKLLAERARVKEEEAARLGIKQEVKSL.

Belongs to the TET family. Fe(2+) serves as cofactor. Zn(2+) is required as a cofactor. Detected in embryo (at protein level). Detected in embryonic head, in developing brain, neural tube and eye.

It is found in the nucleus. The protein localises to the chromosome. It carries out the reaction a 5-methyl-2'-deoxycytidine in DNA + 2-oxoglutarate + O2 = a 5-hydroxymethyl-2'-deoxycytidine in DNA + succinate + CO2. The enzyme catalyses a 5-hydroxymethyl-2'-deoxycytidine in DNA + 2-oxoglutarate + O2 = a 5-formyl-2'-deoxycytidine in DNA + succinate + CO2 + H2O. It catalyses the reaction a 5-formyl-2'-deoxycytidine in DNA + 2-oxoglutarate + O2 = a 5-carboxyl-2'-deoxycytidine in DNA + succinate + CO2 + H(+). Dioxygenase that catalyzes the conversion of the modified genomic base 5-methylcytosine (5mC) into 5-hydroxymethylcytosine (5hmC) and plays a key role in epigenetic chromatin reprogramming during embryonic development. Conversion of 5mC into 5hmC probably constitutes the first step in cytosine demethylation. Selectively binds to the promoter region of target genes and contributes to regulate the expression of numerous developmental genes, including pax6, rax, sox9 and six3. May also contribute to the regulation of target genes in ways that do not require its enzyme activity. The chain is Methylcytosine dioxygenase tet3-A from Xenopus laevis (African clawed frog).